The chain runs to 185 residues: Elongation factor P (185 aa).

This sequence belongs to the elongation factor P family.

It is found in the cytoplasm. The protein operates within protein biosynthesis; polypeptide chain elongation. Functionally, involved in peptide bond synthesis. Stimulates efficient translation and peptide-bond synthesis on native or reconstituted 70S ribosomes in vitro. Probably functions indirectly by altering the affinity of the ribosome for aminoacyl-tRNA, thus increasing their reactivity as acceptors for peptidyl transferase. This chain is Elongation factor P, found in Paraburkholderia xenovorans (strain LB400).